A 439-amino-acid polypeptide reads, in one-letter code: C4-dicarboxylate transport protein (439 aa).

9 helical membrane passes run 9–29, 45–65, 80–100, 150–170, 186–206, 221–241, 291–311, 334–354, and 357–377; these read HLYFQVLTAISIGVAVGYYMP, MIKMIITPIIFCTVVTGIAGM, LYFEAVSTLALAIGLMVINVI, GEILQVLFFAILFGLALSAMG, AFFGVVNIIMKFAPIGAFGAM, LGMLMGSFYLTCLLFIFVVLG, VVGLVIPTGYSFNLDGTSIYL, ILGVLMLTSKGAAGVTGSGFV, and AATFAAIPTIPVAGLALILGI.

The protein belongs to the dicarboxylate/amino acid:cation symporter (DAACS) (TC 2.A.23) family.

It is found in the cell inner membrane. Its function is as follows. Responsible for the transport of dicarboxylates such as succinate, fumarate, and malate from the periplasm across the membrane. This is C4-dicarboxylate transport protein from Citrifermentans bemidjiense (strain ATCC BAA-1014 / DSM 16622 / JCM 12645 / Bem) (Geobacter bemidjiensis).